A 193-amino-acid polypeptide reads, in one-letter code: Anthranilate synthase component 2 (193 aa).

One can recognise a Glutamine amidotransferase type-1 domain in the interval 3-193 (NILFLDNFDS…QQSIEWLLNR (191 aa)). 57–59 (GPG) contributes to the L-glutamine binding site. The active-site Nucleophile; for GATase activity is Cys-84. L-glutamine is bound by residues Gln-88 and 134 to 135 (SL). Catalysis depends on for GATase activity residues His-170 and Glu-172.

Heterotetramer consisting of two non-identical subunits: a beta subunit (TrpG) and a large alpha subunit (TrpE).

It carries out the reaction chorismate + L-glutamine = anthranilate + pyruvate + L-glutamate + H(+). The protein operates within amino-acid biosynthesis; L-tryptophan biosynthesis; L-tryptophan from chorismate: step 1/5. Its function is as follows. Part of a heterotetrameric complex that catalyzes the two-step biosynthesis of anthranilate, an intermediate in the biosynthesis of L-tryptophan. In the first step, the glutamine-binding beta subunit (TrpG) of anthranilate synthase (AS) provides the glutamine amidotransferase activity which generates ammonia as a substrate that, along with chorismate, is used in the second step, catalyzed by the large alpha subunit of AS (TrpE) to produce anthranilate. In the absence of TrpG, TrpE can synthesize anthranilate directly from chorismate and high concentrations of ammonia. This Haemophilus influenzae (strain ATCC 51907 / DSM 11121 / KW20 / Rd) protein is Anthranilate synthase component 2 (trpG).